Reading from the N-terminus, the 405-residue chain is Tryptophan synthase beta chain (405 aa).

Residue lysine 98 is modified to N6-(pyridoxal phosphate)lysine.

Belongs to the TrpB family. As to quaternary structure, tetramer of two alpha and two beta chains. Pyridoxal 5'-phosphate serves as cofactor.

It catalyses the reaction (1S,2R)-1-C-(indol-3-yl)glycerol 3-phosphate + L-serine = D-glyceraldehyde 3-phosphate + L-tryptophan + H2O. The protein operates within amino-acid biosynthesis; L-tryptophan biosynthesis; L-tryptophan from chorismate: step 5/5. The beta subunit is responsible for the synthesis of L-tryptophan from indole and L-serine. This chain is Tryptophan synthase beta chain, found in Xanthomonas euvesicatoria pv. vesicatoria (strain 85-10) (Xanthomonas campestris pv. vesicatoria).